The chain runs to 72 residues: Translation initiation factor IF-1 (72 aa).

The 72-residue stretch at 1–72 (MSKEDSIEVT…TKGRITFRHR (72 aa)) folds into the S1-like domain.

The protein belongs to the IF-1 family. As to quaternary structure, component of the 30S ribosomal translation pre-initiation complex which assembles on the 30S ribosome in the order IF-2 and IF-3, IF-1 and N-formylmethionyl-tRNA(fMet); mRNA recruitment can occur at any time during PIC assembly.

Its subcellular location is the cytoplasm. One of the essential components for the initiation of protein synthesis. Stabilizes the binding of IF-2 and IF-3 on the 30S subunit to which N-formylmethionyl-tRNA(fMet) subsequently binds. Helps modulate mRNA selection, yielding the 30S pre-initiation complex (PIC). Upon addition of the 50S ribosomal subunit IF-1, IF-2 and IF-3 are released leaving the mature 70S translation initiation complex. In Solibacter usitatus (strain Ellin6076), this protein is Translation initiation factor IF-1.